We begin with the raw amino-acid sequence, 360 residues long: sn-glycerol-3-phosphate import ATP-binding protein UgpC (360 aa).

Residues 4-235 enclose the ABC transporter domain; it reads LSLKGVKKSY…PATTFVASFI (232 aa). Residue 37-44 coordinates ATP; it reads GPSGCGKS.

This sequence belongs to the ABC transporter superfamily. sn-glycerol-3-phosphate importer (TC 3.A.1.1.3) family. The complex is composed of two ATP-binding proteins (UgpC), two transmembrane proteins (UgpA and UgpE) and a solute-binding protein (UgpB).

It is found in the cell inner membrane. The enzyme catalyses sn-glycerol 3-phosphate(out) + ATP + H2O = sn-glycerol 3-phosphate(in) + ADP + phosphate + H(+). In terms of biological role, part of the ABC transporter complex UgpBAEC involved in sn-glycerol-3-phosphate (G3P) import. Responsible for energy coupling to the transport system. The chain is sn-glycerol-3-phosphate import ATP-binding protein UgpC from Burkholderia mallei (strain ATCC 23344).